A 152-amino-acid chain; its full sequence is Nucleoside diphosphate kinase (152 aa).

6 residues coordinate ATP: lysine 11, phenylalanine 59, arginine 87, threonine 93, arginine 104, and asparagine 114. Residue histidine 117 is the Pros-phosphohistidine intermediate of the active site.

This sequence belongs to the NDK family. In terms of assembly, homotetramer. Mg(2+) is required as a cofactor.

It is found in the cytoplasm. It carries out the reaction dZDP + ATP = dZTP + ADP. The catalysed reaction is a 2'-deoxyribonucleoside 5'-diphosphate + ATP = a 2'-deoxyribonucleoside 5'-triphosphate + ADP. The enzyme catalyses a ribonucleoside 5'-diphosphate + ATP = a ribonucleoside 5'-triphosphate + ADP. The protein operates within purine metabolism. Functionally, major role in the synthesis of nucleoside triphosphates other than ATP. The ATP gamma phosphate is transferred to the NDP beta phosphate via a ping-pong mechanism, using a phosphorylated active-site intermediate. Its function is as follows. (Microbial infection) Catalyzes the phosphorylation of dZDP to dZTP, when the bacterium is infected by a phage that produces the substrate for the synthesis of dZTP (2- amino-2'-deoxyadenosine 5'-triphosphate), which is then used by the phage as a DNA polymerase substrate. The sequence is that of Nucleoside diphosphate kinase from Synechococcus sp. (strain CC9311).